Reading from the N-terminus, the 599-residue chain is Mediator of RNA polymerase II transcription subunit 26 (599 aa).

Residues 10–87 (QIRDRLLQAI…RSWQKLIEPV (78 aa)) enclose the TFIIS N-terminal domain. Disordered stretches follow at residues 98 to 331 (AGAP…RLEL), 352 to 403 (AGLG…RDYT), and 427 to 470 (FDPM…LQSP). Residues 123 to 133 (SVHDLKYRNDM) show a composition bias toward basic and acidic residues. Residues 174–191 (VPNSSPLPTNGISGSPES) show a composition bias toward polar residues. Residues 207–218 (NRLEHGENDKHS) are compositionally biased toward basic and acidic residues. Pro residues predominate over residues 314–324 (SPLPLAQPSTP). Over residues 441–463 (EPVRADSPVHTEQPRTELDKPEA) the composition is skewed to basic and acidic residues. Residues Ser-447 and Ser-469 each carry the phosphoserine modification.

This sequence belongs to the Mediator complex subunit 26 family. As to quaternary structure, component of the Mediator complex, which is composed of MED1, MED4, MED6, MED7, MED8, MED9, MED10, MED11, MED12, MED13, MED13L, MED14, MED15, MED16, MED17, MED18, MED19, MED20, MED21, MED22, MED23, MED24, MED25, MED26, MED27, MED29, MED30, MED31, CCNC, CDK8 and CDC2L6/CDK11. The MED12, MED13, CCNC and CDK8 subunits form a distinct module termed the CDK8 module. Mediator containing the CDK8 module is less active than Mediator lacking this module in supporting transcriptional activation. Individual preparations of the Mediator complex lacking one or more distinct subunits have been variously termed ARC, CRSP, DRIP, PC2, SMCC and TRAP. Interacts with CEBPB (when not methylated).

Its subcellular location is the nucleus. Component of the Mediator complex, a coactivator involved in the regulated transcription of nearly all RNA polymerase II-dependent genes. Mediator functions as a bridge to convey information from gene-specific regulatory proteins to the basal RNA polymerase II transcription machinery. Mediator is recruited to promoters by direct interactions with regulatory proteins and serves as a scaffold for the assembly of a functional pre-initiation complex with RNA polymerase II and the general transcription factors. The protein is Mediator of RNA polymerase II transcription subunit 26 (MED26) of Bos taurus (Bovine).